A 66-amino-acid chain; its full sequence is Large ribosomal subunit protein bL31 (66 aa).

Residues Cys-16, Cys-18, Cys-36, and Cys-39 each contribute to the Zn(2+) site.

This sequence belongs to the bacterial ribosomal protein bL31 family. Type A subfamily. In terms of assembly, part of the 50S ribosomal subunit. Zn(2+) serves as cofactor.

In terms of biological role, binds the 23S rRNA. In Geobacillus sp. (strain WCH70), this protein is Large ribosomal subunit protein bL31.